Consider the following 342-residue polypeptide: Dihydroorotase (342 aa).

Zn(2+) is bound by residues His13 and His15. Substrate contacts are provided by residues 15–17 and Asn41; that span reads HLR. The Zn(2+) site is built by Lys97, His134, and His172. Residue Lys97 is modified to N6-carboxylysine. Position 134 (His134) interacts with substrate. Residue Leu217 coordinates substrate. Asp245 contacts Zn(2+). Asp245 is an active-site residue. Residues His249 and Ala261 each contribute to the substrate site.

It belongs to the metallo-dependent hydrolases superfamily. DHOase family. Class II DHOase subfamily. In terms of assembly, homodimer. Zn(2+) is required as a cofactor.

It catalyses the reaction (S)-dihydroorotate + H2O = N-carbamoyl-L-aspartate + H(+). The protein operates within pyrimidine metabolism; UMP biosynthesis via de novo pathway; (S)-dihydroorotate from bicarbonate: step 3/3. In terms of biological role, catalyzes the reversible cyclization of carbamoyl aspartate to dihydroorotate. This is Dihydroorotase from Shewanella loihica (strain ATCC BAA-1088 / PV-4).